The chain runs to 234 residues: UDP-2,3-diacylglucosamine hydrolase (234 aa).

The Mn(2+) site is built by Asp9, His11, Asp42, Asn80, and His115. 80 to 81 (NR) is a substrate binding site. Substrate-binding residues include Asp123, Ser161, Lys165, Lys168, and His196. Residues His196 and His198 each contribute to the Mn(2+) site.

It belongs to the LpxH family. It depends on Mn(2+) as a cofactor.

The protein localises to the cell inner membrane. It carries out the reaction UDP-2-N,3-O-bis[(3R)-3-hydroxytetradecanoyl]-alpha-D-glucosamine + H2O = 2-N,3-O-bis[(3R)-3-hydroxytetradecanoyl]-alpha-D-glucosaminyl 1-phosphate + UMP + 2 H(+). The protein operates within glycolipid biosynthesis; lipid IV(A) biosynthesis; lipid IV(A) from (3R)-3-hydroxytetradecanoyl-[acyl-carrier-protein] and UDP-N-acetyl-alpha-D-glucosamine: step 4/6. In terms of biological role, hydrolyzes the pyrophosphate bond of UDP-2,3-diacylglucosamine to yield 2,3-diacylglucosamine 1-phosphate (lipid X) and UMP by catalyzing the attack of water at the alpha-P atom. Involved in the biosynthesis of lipid A, a phosphorylated glycolipid that anchors the lipopolysaccharide to the outer membrane of the cell. This is UDP-2,3-diacylglucosamine hydrolase from Histophilus somni (strain 129Pt) (Haemophilus somnus).